Consider the following 232-residue polypeptide: Ubiquinone biosynthesis O-methyltransferase (232 aa).

Positions 36, 55, 76, and 120 each coordinate S-adenosyl-L-methionine.

Belongs to the methyltransferase superfamily. UbiG/COQ3 family.

It carries out the reaction a 3-demethylubiquinol + S-adenosyl-L-methionine = a ubiquinol + S-adenosyl-L-homocysteine + H(+). The enzyme catalyses a 3-(all-trans-polyprenyl)benzene-1,2-diol + S-adenosyl-L-methionine = a 2-methoxy-6-(all-trans-polyprenyl)phenol + S-adenosyl-L-homocysteine + H(+). The protein operates within cofactor biosynthesis; ubiquinone biosynthesis. Its function is as follows. O-methyltransferase that catalyzes the 2 O-methylation steps in the ubiquinone biosynthetic pathway. In Pseudomonas fluorescens (strain SBW25), this protein is Ubiquinone biosynthesis O-methyltransferase.